Consider the following 683-residue polypeptide: Cyclic nucleotide-gated channel alpha-1 (683 aa).

Residues 1–160 are Cytoplasmic-facing; that stretch reads MKTNIINTWH…PSGNMYYNWL (160 aa). The interval 34-144 is disordered; sequence ACSSFSDNDN…PKEKKEEEKK (111 aa). Positions 105–144 are enriched in basic and acidic residues; it reads SKADDKKESKKDPEKKKKKEKEKEKKKEEKPKEKKEEEKK. Residues 161–182 form a helical membrane-spanning segment; the sequence is FCITLPVMYNWTMIIARACFDE. Residues 183-192 are Extracellular-facing; the sequence is LQSDYLEYWL. The chain crosses the membrane as a helical span at residues 193 to 213; that stretch reads IFDYVSDVVYLADMFVRTRTG. Topologically, residues 214 to 238 are cytoplasmic; that stretch reads YLEQGLLVKDELKLIEKYKANLQFK. Residues 239–257 form a helical membrane-spanning segment; that stretch reads LDVLSVIPTDLLYFKFGWN. The Extracellular segment spans residues 258–262; the sequence is YPEIR. The chain crosses the membrane as a helical span at residues 263–281; the sequence is LNRLLRISRMFEFFQRTET. At 282–288 the chain is on the cytoplasmic side; that stretch reads RTNYPNI. Positions 286 to 394 are ion conduction pathway; the sequence is PNIFRISNLV…GNIGSMISNM (109 aa). The helical transmembrane segment at 289–312 threads the bilayer; it reads FRISNLVMYIVIIIHWNACVYYSI. The Extracellular segment spans residues 313 to 335; sequence SKAIGFGNDTWVYPDVNDPEFGR. Asn-320 carries an N-linked (GlcNAc...) asparagine glycan. The next 2 helical transmembrane spans lie at 336–370 and 371–395; these read LARKYVYSLYWSTLTLTTIGETPPPVLDSEYVFVV and VDFLIGVLIFATIVGNIGSMISNMN. Residues 353–356 are selectivity filter; that stretch reads TIGE. Positions 396 to 472 are C-linker; the sequence is AARAEFQSRV…DTLKKVRIFA (77 aa). The Cytoplasmic segment spans residues 396–683; it reads AARAEFQSRV…ESEPTESLQG (288 aa). The cyclic nucleotide-binding domain stretch occupies residues 476-596; it reads AGLLVELVLK…EEKGRQILMK (121 aa). 3',5'-cyclic GMP contacts are provided by Gly-536, Ser-539, Arg-552, and Thr-553. 3',5'-cyclic AMP contacts are provided by Arg-552 and Thr-553. Residues 614 to 668 are a coiled coil; the sequence is LEEKVTRMEGSVDLLQTRFARILAEYESMQQKLKQRLTKVEKFLKPLIETEFSAL.

The protein belongs to the cyclic nucleotide-gated cation channel (TC 1.A.1.5) family. CNGA1 subfamily. As to quaternary structure, forms heterotetrameric channels composed of CNGA1 and CNGB1 subunits with 3:1 stoichiometry. May also form cyclic nucleotide-activated homotetrameric channels, that are efficiently activated by saturating cGMP, but poorly activated by saturating cAMP compared to the heterotetramer with CNGB1. The channel binds Ca(2+)-bound CALM1 via CaM1 and CaM2 regions of the CNGB1 subunit; this interaction modulates the affinity of the channel for cNMPs in response to intracellular Ca(2+) levels. As to expression, rod cells in the retina.

It is found in the cell membrane. It catalyses the reaction Ca(2+)(in) = Ca(2+)(out). The catalysed reaction is Na(+)(in) = Na(+)(out). The enzyme catalyses K(+)(in) = K(+)(out). It carries out the reaction NH4(+)(in) = NH4(+)(out). It catalyses the reaction Rb(+)(in) = Rb(+)(out). The catalysed reaction is Li(+)(in) = Li(+)(out). The enzyme catalyses Cs(+)(in) = Cs(+)(out). Pore-forming subunit of the rod cyclic nucleotide-gated channel. Mediates rod photoresponses at dim light converting transient changes in intracellular cGMP levels into electrical signals. In the dark, cGMP levels are high and keep the channel open enabling a steady inward current carried by Na(+) and Ca(2+) ions that leads to membrane depolarization and neurotransmitter release from synaptic terminals. Upon photon absorption cGMP levels decline leading to channel closure and membrane hyperpolarization that ultimately slows neurotransmitter release and signals the presence of light, the end point of the phototransduction cascade. Conducts cGMP- and cAMP-gated ion currents, with permeability for monovalent and divalent cations. The selectivity for Ca(2+) over Na(+) increases with cGMP concentrations, whereas the selectivity among monovalent ions is independent of the cGMP levels. The polypeptide is Cyclic nucleotide-gated channel alpha-1 (Rattus norvegicus (Rat)).